The sequence spans 93 residues: NADH-ubiquinone oxidoreductase chain 4L (93 aa).

3 consecutive transmembrane segments (helical) span residues 2-22 (ALYE…GFVL), 27-47 (IILM…LVLV), and 62-82 (IYII…LVAY).

Belongs to the complex I subunit 4L family.

The protein resides in the mitochondrion inner membrane. The catalysed reaction is a ubiquinone + NADH + 5 H(+)(in) = a ubiquinol + NAD(+) + 4 H(+)(out). In terms of biological role, core subunit of the mitochondrial membrane respiratory chain NADH dehydrogenase (Complex I) that is believed to belong to the minimal assembly required for catalysis. Complex I functions in the transfer of electrons from NADH to the respiratory chain. The immediate electron acceptor for the enzyme is believed to be ubiquinone. The protein is NADH-ubiquinone oxidoreductase chain 4L (ND4L) of Mycosarcoma maydis (Corn smut fungus).